The chain runs to 152 residues: Small ribosomal subunit protein uS13 (152 aa).

Belongs to the universal ribosomal protein uS13 family.

It localises to the cytoplasm. In terms of biological role, located at the top of the head of the 40S subunit, it contacts several helices of the 18S rRNA. The protein is Small ribosomal subunit protein uS13 (RPS18) of Argopecten irradians (Bay scallop).